The primary structure comprises 387 residues: Cysteine desulfurase IscS (387 aa).

Pyridoxal 5'-phosphate is bound by residues 73-74, Asn-155, Gln-183, and 203-205; these read AT and SAH. Lys-206 bears the N6-(pyridoxal phosphate)lysine mark. Thr-241 provides a ligand contact to pyridoxal 5'-phosphate. The Cysteine persulfide intermediate role is filled by Cys-328. Cys-328 provides a ligand contact to [2Fe-2S] cluster.

This sequence belongs to the class-V pyridoxal-phosphate-dependent aminotransferase family. NifS/IscS subfamily. Homodimer. Forms a heterotetramer with IscU, interacts with other sulfur acceptors. The cofactor is pyridoxal 5'-phosphate.

The protein localises to the cytoplasm. It carries out the reaction (sulfur carrier)-H + L-cysteine = (sulfur carrier)-SH + L-alanine. Its pathway is cofactor biosynthesis; iron-sulfur cluster biosynthesis. Its function is as follows. Master enzyme that delivers sulfur to a number of partners involved in Fe-S cluster assembly, tRNA modification or cofactor biosynthesis. Catalyzes the removal of elemental sulfur atoms from cysteine to produce alanine. Functions as a sulfur delivery protein for Fe-S cluster synthesis onto IscU, an Fe-S scaffold assembly protein, as well as other S acceptor proteins. The chain is Cysteine desulfurase IscS from Helicobacter pylori (strain ATCC 700392 / 26695) (Campylobacter pylori).